Consider the following 289-residue polypeptide: Minor capsid protein P10 (289 aa).

A hydrophobic region spans residues 1–21 (MMNFILVLLIVAMIGTILVSE).

In terms of assembly, interacts with the major capsid protein.

Its subcellular location is the virion. Functionally, one of the minor capsid proteins that constitute a network internal to the major capsid proteins and outside the lipid membrane. The minor capsid proteins glue and stabilize the capsomers. This Chlorella (PBCV-1) protein is Minor capsid protein P10.